Here is a 75-residue protein sequence, read N- to C-terminus: Small ribosomal subunit protein bS18 (75 aa).

This sequence belongs to the bacterial ribosomal protein bS18 family. As to quaternary structure, part of the 30S ribosomal subunit. Forms a tight heterodimer with protein bS6.

Functionally, binds as a heterodimer with protein bS6 to the central domain of the 16S rRNA, where it helps stabilize the platform of the 30S subunit. The sequence is that of Small ribosomal subunit protein bS18 from Dinoroseobacter shibae (strain DSM 16493 / NCIMB 14021 / DFL 12).